We begin with the raw amino-acid sequence, 289 residues long: Ketose 3-epimerase (289 aa).

Glutamate 146 serves as the catalytic Proton donor/acceptor. Glutamate 146 contributes to the Mn(2+) binding site. Substrate is bound by residues glutamate 152 and 179-182 (DTYH). Mn(2+) is bound by residues aspartate 179 and histidine 205. Arginine 211 is a substrate binding site. Glutamate 240 acts as the Proton donor/acceptor in catalysis. Residue glutamate 240 coordinates Mn(2+).

This sequence belongs to the hyi family. In terms of assembly, homotetramer. Mg(2+) is required as a cofactor. The cofactor is Mn(2+). Requires Co(2+) as cofactor.

It carries out the reaction L-ribulose = L-xylulose. The enzyme catalyses D-allulose = keto-D-fructose. It catalyses the reaction keto-L-tagatose = keto-L-sorbose. The catalysed reaction is D-ribulose = D-xylulose. It carries out the reaction L-allulose = keto-L-fructose. The enzyme catalyses keto-D-tagatose = keto-D-sorbose. Functionally, catalyzes the reversible C-3 epimerization of several ketoses. Shows the highest enzymatic activity for the epimerization of L-ribulose to L-xylulose. Is also able to convert D-allulose (also known as D-psicose) to D-fructose and, to a lesser extent, L-tagatose to L-sorbose, D-ribulose to D-xylulose, L-allulose to L-fructose and D-tagatose to D-sorbose. The chain is Ketose 3-epimerase from Arthrobacter globiformis.